The following is a 585-amino-acid chain: Probable G-protein coupled receptor Mth-like 10 (585 aa).

The N-terminal stretch at 1–32 is a signal peptide; it reads MPKKIHQPGGSLYCGVTLLGVLCLVVFRLIPG. Residues 33-250 are Extracellular-facing; the sequence is IPFGTYVMAE…DHSTVKIINS (218 aa). Intrachain disulfides connect C56-C110, C112-C117, C121-C216, C122-C135, and C177-C236. N-linked (GlcNAc...) asparagine glycosylation is found at N63 and N72. Residues N142, N152, N157, N198, and N223 are each glycosylated (N-linked (GlcNAc...) asparagine). The helical transmembrane segment at 251–271 threads the bilayer; sequence YAMMFSIPFMMLTIAVYLLIP. At 272–280 the chain is on the cytoplasmic side; sequence ELRNQHGKS. A helical membrane pass occupies residues 281–301; that stretch reads LVCYLIGLSVGYSSLCYVQLY. At 302–312 the chain is on the extracellular side; that stretch reads QVDATGVTCKV. Residues 313 to 333 traverse the membrane as a helical segment; that stretch reads FGYTAYFFFMGAYMWLSVISF. The Cytoplasmic segment spans residues 334–353; sequence DLWHNFRGTRGINRFQEKKR. A helical transmembrane segment spans residues 354-374; the sequence is FLFYSLYSWGIALVFLAFTYC. The Extracellular segment spans residues 375-404; the sequence is AQQLTNLPANLKPGIGDGVYCWLDMSNWAA. A helical transmembrane segment spans residues 405–425; it reads MIYFYGPILAIVVANTIMFIM. Residues 426 to 466 are Cytoplasmic-facing; the sequence is TAIKIHGVQREMARIIASENSTKNLRTEKDKRFYRAWSNYR. The helical transmembrane segment at 467–487 threads the bilayer; the sequence is FGLFLRLFLIMGITWLTELIS. Residues 488-498 are Extracellular-facing; the sequence is YFVGSDKGWSK. The helical transmembrane segment at 499–519 threads the bilayer; it reads LFYISDLANAMQGFLIFMLFV. Topologically, residues 520 to 585 are cytoplasmic; that stretch reads MKKKVKHLIT…VDPQKTTIFR (66 aa).

It belongs to the G-protein coupled receptor 2 family. Mth subfamily.

The protein localises to the cell membrane. The protein is Probable G-protein coupled receptor Mth-like 10 (mthl10) of Drosophila melanogaster (Fruit fly).